The following is a 223-amino-acid chain: Alpha-S2-casein (223 aa).

An N-terminal signal peptide occupies residues 1 to 15; it reads MKFFIFTCLLAVALA. Phosphoserine is present on residues serine 23, serine 24, serine 25, serine 72, serine 73, serine 74, serine 77, serine 145, serine 147, serine 151, and serine 159. The stretch at residues 77-141 is a repeat; sequence SAEVAPEEIK…AGPFTPTVNR (65 aa). The stretch at residues 159–223 is a repeat; it reads STEVFTKKTK…TNAIPYVRYL (65 aa).

The protein belongs to the alpha-casein family. Mammary gland specific. Secreted in milk.

Its subcellular location is the secreted. In terms of biological role, important role in the capacity of milk to transport calcium phosphate. The chain is Alpha-S2-casein (CSN1S2) from Capra hircus (Goat).